Consider the following 161-residue polypeptide: MLILDRSSPQIFISNEQQDVSIDLQSAQRLVVLFLELQKVSTDQVYVYFLDDTALAQLHDEQFSDPSLTDTITLPIDKPGIASFPHVLGEAFVSPKAAMRFLEQYTEDQLYHEISRYVVHSLLHMLGYDDQTDEDKRIMQEQEDVSLSFLAEHQALLRPAV.

Zn(2+) contacts are provided by His120, His124, and Asp130.

It belongs to the endoribonuclease YbeY family. The cofactor is Zn(2+).

It is found in the cytoplasm. Its function is as follows. Single strand-specific metallo-endoribonuclease involved in late-stage 70S ribosome quality control and in maturation of the 3' terminus of the 16S rRNA. In Chlamydia trachomatis serovar L2 (strain ATCC VR-902B / DSM 19102 / 434/Bu), this protein is Endoribonuclease YbeY.